Here is a 516-residue protein sequence, read N- to C-terminus: Probable metalloreductase AIM14 (516 aa).

A run of 7 helical transmembrane segments spans residues 18–38, 64–84, 97–117, 128–148, 168–188, 195–215, and 217–237; these read IGYGYYTFGVSVGYILLLLLL, LHLPILLLFLEIAFLGHYSVI, LSYVLLFLNIFLTLRPNYILS, HMWLSRAISTFGVFHGLAFVI, LLGFIVWILLIILLITSTGVI, SFYMVHQINAFAISFIVPVHA, and PGVALPYTITIAVLLGLHALA. The Ferric oxidoreductase domain maps to 94-207; the sequence is LGRLSYVLLF…MVHQINAFAI (114 aa). The region spanning 238–363 is the FAD-binding FR-type domain; it reads RVSFCMSSAV…GGTGISLGLP (126 aa).

This sequence belongs to the ferric reductase (FRE) family. AIM14 subfamily.

It is found in the membrane. Probable cell surface metalloreductase. May be involved in iron or copper homeostasis. The polypeptide is Probable metalloreductase AIM14 (AIM14) (Eremothecium gossypii (strain ATCC 10895 / CBS 109.51 / FGSC 9923 / NRRL Y-1056) (Yeast)).